A 287-amino-acid chain; its full sequence is Shikimate kinase 3, chloroplastic (287 aa).

A chloroplast-targeting transit peptide spans 1–57; it reads MDAGVGLRAKPGAWAGLGNPRRSSTARVPVRFAVEKFAQPLVLGSDRRSCGAKLKVS. An ATP-binding site is contributed by 98–105; the sequence is GMMGSGKT. Position 105 (Thr105) interacts with Mg(2+). Residues Asp123, Arg148, and Gly170 each contribute to the substrate site. Arg209 is a binding site for ATP.

It belongs to the shikimate kinase family. The cofactor is Mg(2+). As to expression, expressed in panicles.

The protein resides in the plastid. Its subcellular location is the chloroplast. It catalyses the reaction shikimate + ATP = 3-phosphoshikimate + ADP + H(+). Its pathway is metabolic intermediate biosynthesis; chorismate biosynthesis; chorismate from D-erythrose 4-phosphate and phosphoenolpyruvate: step 5/7. Functionally, catalyzes the specific phosphorylation of the 3-hydroxyl group of shikimic acid using ATP as a cosubstrate. The chain is Shikimate kinase 3, chloroplastic (SK3) from Oryza sativa subsp. japonica (Rice).